The sequence spans 421 residues: Chitin deacetylase (421 aa).

An N-terminal signal peptide occupies residues 1-21 (MQIKTFALSAAIAQVATLALA). N-linked (GlcNAc...) asparagine glycans are attached at residues Asn39, Asn70, Asn87, and Asn106. The NodB homology domain maps to 157–349 (ETWGLTYDDG…YKQVIDVATC (193 aa)). The Proton acceptor role is filled by Asp164. Asp164 is a binding site for acetate. Position 165 (Asp165) interacts with Co(2+). A glycan (N-linked (GlcNAc...) asparagine) is linked at Asn168. Residues His214 and His218 each contribute to the Co(2+) site. Residue Tyr255 coordinates acetate. A glycan (N-linked (GlcNAc...) asparagine) is linked at Asn307. The active-site Proton donor is His320. Asn323, Asn351, and Asn367 each carry an N-linked (GlcNAc...) asparagine glycan. Thr390 carries GPI-anchor amidated threonine lipidation. Residues 391–421 (AAAHIQASTSGAMSVLPNLALISAFIATLLF) constitute a propeptide, removed in mature form.

Belongs to the polysaccharide deacetylase family. It depends on Co(2+) as a cofactor.

The protein localises to the secreted. It is found in the cell wall. The protein resides in the cell membrane. The catalysed reaction is [(1-&gt;4)-N-acetyl-beta-D-glucosaminyl](n) + n H2O = chitosan + n acetate. In terms of biological role, hydrolyzes the N-acetamido groups of N-acetyl-D-glucosamine residues in chitin to form chitosan and acetate. The chain is Chitin deacetylase from Amylomyces rouxii (Filamentous fungus).